The sequence spans 376 residues: Transcriptional regulator STP4 (376 aa).

3 disordered regions span residues 25-58 (QNYC…PHAS), 89-122 (SSNS…SNSS), and 137-210 (VNCI…NWKP). Low complexity-rich tracts occupy residues 32 to 50 (SPSP…TSPP) and 89 to 103 (SSNS…YSPT). Composition is skewed to polar residues over residues 146 to 183 (PRST…LSVK) and 191 to 200 (EPQNSNTIIS). The C2H2-type zinc-finger motif lies at 241-263 (HICKYCERGFARPNDLFRHVKCH).

Its subcellular location is the nucleus. Probable transcription factor involved in response to cell wall damage. The chain is Transcriptional regulator STP4 (STP4) from Candida albicans (strain SC5314 / ATCC MYA-2876) (Yeast).